The chain runs to 100 residues: Integration host factor subunit alpha (100 aa).

The protein belongs to the bacterial histone-like protein family. As to quaternary structure, heterodimer of an alpha and a beta chain.

In terms of biological role, this protein is one of the two subunits of integration host factor, a specific DNA-binding protein that functions in genetic recombination as well as in transcriptional and translational control. The chain is Integration host factor subunit alpha from Buchnera aphidicola subsp. Schizaphis graminum (strain Sg).